Here is a 228-residue protein sequence, read N- to C-terminus: Probable U3 small nucleolar RNA-associated protein 11 (228 aa).

Disordered regions lie at residues 1–23 and 192–211; these read MSSLRNAIPRPAHKERSQPEARK and SMQKELQKKGRKRKLRDDEL. The segment covering 12 to 23 has biased composition (basic and acidic residues); it reads AHKERSQPEARK.

It belongs to the UTP11 family. In terms of assembly, component of the ribosomal small subunit (SSU) processome.

Its subcellular location is the nucleus. The protein resides in the nucleolus. Functionally, involved in nucleolar processing of pre-18S ribosomal RNA. This is Probable U3 small nucleolar RNA-associated protein 11 from Arabidopsis thaliana (Mouse-ear cress).